The primary structure comprises 275 residues: Large ribosomal subunit protein uL2 (275 aa).

2 disordered regions span residues 36–55 (PKKRGSGRNNNGHITVRHKG) and 223–275 (VVMN…RHAR).

The protein belongs to the universal ribosomal protein uL2 family. In terms of assembly, part of the 50S ribosomal subunit. Forms a bridge to the 30S subunit in the 70S ribosome.

One of the primary rRNA binding proteins. Required for association of the 30S and 50S subunits to form the 70S ribosome, for tRNA binding and peptide bond formation. It has been suggested to have peptidyltransferase activity; this is somewhat controversial. Makes several contacts with the 16S rRNA in the 70S ribosome. This chain is Large ribosomal subunit protein uL2, found in Thiobacillus denitrificans (strain ATCC 25259 / T1).